Consider the following 148-residue polypeptide: Lysozyme C (148 aa).

Residues 1-18 form the signal peptide; that stretch reads MKAPLLLGLLLLSVTVQG. Positions 19 to 148 constitute a C-type lysozyme domain; the sequence is KVFERCDLAR…VSQYVRNCGV (130 aa). Intrachain disulfides connect Cys24/Cys146, Cys48/Cys134, Cys83/Cys99, and Cys95/Cys113. Catalysis depends on residues Glu53 and Asp71.

It belongs to the glycosyl hydrolase 22 family. As to quaternary structure, monomer.

The protein resides in the secreted. The catalysed reaction is Hydrolysis of (1-&gt;4)-beta-linkages between N-acetylmuramic acid and N-acetyl-D-glucosamine residues in a peptidoglycan and between N-acetyl-D-glucosamine residues in chitodextrins.. Functionally, lysozymes have primarily a bacteriolytic function; those in tissues and body fluids are associated with the monocyte-macrophage system and enhance the activity of immunoagents. This chain is Lysozyme C (LYZ), found in Leptonychotes weddellii (Weddell seal).